A 742-amino-acid polypeptide reads, in one-letter code: TBC1 domain family member 25 (742 aa).

The disordered stretch occupies residues 1–22 (MRPPAQARWEGQGPTAPLRLRS). Ser194 is subject to Phosphoserine. At Thr214 the chain carries Phosphothreonine. A Rab-GAP TBC domain is found at 282 to 488 (GVEPSLRKVV…RMLEVTWSSL (207 aa)). Position 560 is a phosphoserine (Ser560). Residues 592–664 (SLSEPLLNSP…PPMGLPPPQE (73 aa)) form a disordered region. The span at 600-628 (SPDPLLSTSSRPDSPSSSSPPSTQEASPS) shows a compositional bias: low complexity. Residues 649 to 663 (KPVPPPPPMGLPPPQ) show a composition bias toward pro residues.

In terms of assembly, interacts (via N-terminus) with MAP1LC3B, GABARAP and GABARAPL2.

It is found in the cytoplasm. The protein resides in the cytoplasmic vesicle. Its subcellular location is the autophagosome. In terms of biological role, acts as a GTPase-activating protein specific for RAB33B. Involved in the regulation of autophagosome maturation, the process in which autophagosomes fuse with endosomes and lysosomes. This chain is TBC1 domain family member 25 (Tbc1d25), found in Mus musculus (Mouse).